The following is a 253-amino-acid chain: Ubiquinone/menaquinone biosynthesis C-methyltransferase UbiE (253 aa).

S-adenosyl-L-methionine is bound by residues Thr-76, Asp-97, 125–126 (NA), and Ser-142.

This sequence belongs to the class I-like SAM-binding methyltransferase superfamily. MenG/UbiE family.

The enzyme catalyses a 2-demethylmenaquinol + S-adenosyl-L-methionine = a menaquinol + S-adenosyl-L-homocysteine + H(+). It carries out the reaction a 2-methoxy-6-(all-trans-polyprenyl)benzene-1,4-diol + S-adenosyl-L-methionine = a 5-methoxy-2-methyl-3-(all-trans-polyprenyl)benzene-1,4-diol + S-adenosyl-L-homocysteine + H(+). Its pathway is quinol/quinone metabolism; menaquinone biosynthesis; menaquinol from 1,4-dihydroxy-2-naphthoate: step 2/2. It participates in cofactor biosynthesis; ubiquinone biosynthesis. Methyltransferase required for the conversion of demethylmenaquinol (DMKH2) to menaquinol (MKH2) and the conversion of 2-polyprenyl-6-methoxy-1,4-benzoquinol (DDMQH2) to 2-polyprenyl-3-methyl-6-methoxy-1,4-benzoquinol (DMQH2). The sequence is that of Ubiquinone/menaquinone biosynthesis C-methyltransferase UbiE from Xylella fastidiosa (strain 9a5c).